Reading from the N-terminus, the 305-residue chain is GTP cyclohydrolase FolE2 (305 aa).

This sequence belongs to the GTP cyclohydrolase IV family.

The enzyme catalyses GTP + H2O = 7,8-dihydroneopterin 3'-triphosphate + formate + H(+). Its pathway is cofactor biosynthesis; 7,8-dihydroneopterin triphosphate biosynthesis; 7,8-dihydroneopterin triphosphate from GTP: step 1/1. Converts GTP to 7,8-dihydroneopterin triphosphate. This chain is GTP cyclohydrolase FolE2, found in Xanthomonas euvesicatoria pv. vesicatoria (strain 85-10) (Xanthomonas campestris pv. vesicatoria).